The following is a 3132-amino-acid chain: Toxin CdiA (3132 aa).

The signal signal peptide spans 1–32 (MHQPPVRFTYRLLSYLVSAIIAGQPLLPAVGA). The tract at residues 36–322 (PQNGAGMDKA…AGGNLSVTGT (287 aa)) is two-partner system transport domain (TPS). Positions 351–1378 (GELTAGQNAM…ITMNTAHLLN (1028 aa)) are FHA-1. Residues 1379–1635 (SWDAISASHE…LSLSGASVSS (257 aa)) are receptor-binding domain (RBD). Positions 1636 to 1820 (YPLPSGNNGY…LSPEDITLHN (185 aa)) are YP domain. The segment at 1821-1859 (GSVISGNNVQLAGGNITNSGSSINAQNDLLLDRTGSIDN) is periplasmic FHA-1 repeat (pFR). The segment at 1930–2526 (RATDSLFMGA…QDSDRYDSRQ (597 aa)) is FHA-2. Disordered regions lie at residues 2195-2228 (TGTG…STIG) and 2456-2497 (AGIN…SGAQ). 2 stretches are compositionally biased toward polar residues: residues 2217-2228 (GTTQSQSASTIG) and 2483-2497 (VSLT…SGAQ). A pre-toxin (PT) domain region spans residues 2862–2904 (DNLSEQERQQISMLATIASGIAGGLVGNSTSAAGTGAQAGRNS). A VENN CT cleavage motif motif is present at residues 2905 to 2908 (VENN). The C-terminal effector domain (CT) stretch occupies residues 2909–3121 (AMSGLEGFGT…IGTVTDYQIE (213 aa)).

The protein in the N-terminal section; belongs to the CdiA toxin family. Probably interacts with cognate immunity protein CdiI. In terms of processing, expressed as 303 kDa protein which can be processed to 284 kDa and 195 kDa forms.

It localises to the secreted. It is found in the target cell. The protein localises to the target cell cytoplasm. In terms of biological role, toxic component of a toxin-immunity protein module, which functions as a cellular contact-dependent growth inhibition (CDI) system. CDI modules allow bacteria to communicate with and inhibit the growth of closely related neighboring bacteria (target cell counts decrease 1000- to 10(5)-fold) in a contact-dependent fashion. Inhibitory cells must be in logarithmic (not stationary) phase to inhibit growth of their targets, but protein synthesis is not necessary. The presence of P or S but not type 1 pili protects the target cells against growth inhibition for this CDI. BamA on the outer membrane of target cells acts as a receptor for CdiA, while target cell multidrug efflux pump AcrB facilitates its transport into the cytoplasm. Outer membrane receptor function is dependent on extracellular loops of BamA. Cells undergoing CDI show a 2- to 5-fold reversible decrease in aerobic respiration, proton motive force and steady-state ATP levels, suggesting this CT module is an ionophore that disrupts the target cell's inner cell membrane. Growth recovery requires an energy source. Cells expressing this protein in the absence of CdiI initially form filaments, some of which contain multiple nucleoids, while others are devoid of nucleoids. CDI cells induce the phage shock response, but pspA is not required for recovery from CDI. CDI is neutralized by its cognate immunity protein CdiI, but not by non-cognate CdiI from other bacteria with different CDI systems. Plays a role in biofilm formation, a region N-terminal to residue 644 is implicated in this receptor-independent cell adhesion. Functionally, the CdiA protein is thought to be exported from the cell through the central lumen of CdiB, the other half of its two-partner system (TPS). The TPS domain probably remains associated with CdiB while the FHA-1 domain forms an extended filament (33 nm long) with the receptor-binding domain (RBD) at its extremity; in the secretion arrested state the C-terminus of the RBD and YP domains form a hairpin-like structure as the FHA-2, PT and CT domains are periplasmic. The YP domain is probably responsible for this arrest at the point where it re-enters the host cell periplasm. Upon binding to a target cell outer membrane receptor (BamA for this CDI) a signal is transmitted to activate secretion. The filament becomes about 5 nm longer, the rest of CdiA is secreted and the FHA-2 domain becomes stably associated with the target cell's outer membrane where it facilitates entry of the toxic CT domain into the target cell periplasm. From there the toxic CT domain is cleaved and gains access to the target cell cytoplasm via an inner membrane protein (multidrug efflux pump AcrB for this CDI). This Escherichia coli protein is Toxin CdiA.